The sequence spans 97 residues: Serine protease inhibitor Kazal-type 14 (97 aa).

The N-terminal stretch at M1–S21 is a signal peptide. Residues G34–C97 enclose the Kazal-like domain. Cystine bridges form between C40–C79, C57–C76, and C65–C97. N-linked (GlcNAc...) asparagine glycosylation occurs at N51.

The protein resides in the secreted. Its function is as follows. May be a serine protease inhibitor. The sequence is that of Serine protease inhibitor Kazal-type 14 (SPINK14) from Homo sapiens (Human).